The following is a 1220-amino-acid chain: DNA-directed RNA polymerase subunit beta' (1220 aa).

Zn(2+) is bound by residues Cys-61, Cys-63, Cys-76, and Cys-79. Residues Asp-450, Asp-452, and Asp-454 each contribute to the Mg(2+) site. The tract at residues 1197–1220 (QPESESEEASDIPKLDDVAKTFDN) is disordered. Residues 1207-1220 (DIPKLDDVAKTFDN) are compositionally biased toward basic and acidic residues.

This sequence belongs to the RNA polymerase beta' chain family. As to quaternary structure, the RNAP catalytic core consists of 2 alpha, 1 beta, 1 beta' and 1 omega subunit. When a sigma factor is associated with the core the holoenzyme is formed, which can initiate transcription. The cofactor is Mg(2+). Zn(2+) is required as a cofactor.

The enzyme catalyses RNA(n) + a ribonucleoside 5'-triphosphate = RNA(n+1) + diphosphate. Its function is as follows. DNA-dependent RNA polymerase catalyzes the transcription of DNA into RNA using the four ribonucleoside triphosphates as substrates. This is DNA-directed RNA polymerase subunit beta' from Leuconostoc mesenteroides subsp. mesenteroides (strain ATCC 8293 / DSM 20343 / BCRC 11652 / CCM 1803 / JCM 6124 / NCDO 523 / NBRC 100496 / NCIMB 8023 / NCTC 12954 / NRRL B-1118 / 37Y).